The chain runs to 219 residues: Ribonuclease HII (219 aa).

Positions 10-219 (HLEAGTDEAG…LLPEQTVLDL (210 aa)) constitute an RNase H type-2 domain. Residues aspartate 16, glutamate 17, and aspartate 108 each contribute to the a divalent metal cation site.

Belongs to the RNase HII family. It depends on Mn(2+) as a cofactor. Requires Mg(2+) as cofactor.

It is found in the cytoplasm. It catalyses the reaction Endonucleolytic cleavage to 5'-phosphomonoester.. Functionally, endonuclease that specifically degrades the RNA of RNA-DNA hybrids. The polypeptide is Ribonuclease HII (Flavobacterium psychrophilum (strain ATCC 49511 / DSM 21280 / CIP 103535 / JIP02/86)).